The primary structure comprises 308 residues: Glucan 1,3-beta-glucosidase (308 aa).

Residues 1–18 (MQIKFLTTLATVLTSVAA) form the signal peptide. E119 functions as the Proton donor in the catalytic mechanism. N197 carries an N-linked (GlcNAc...) asparagine glycan. Residue E228 is the Nucleophile of the active site.

Belongs to the glycosyl hydrolase 17 family.

It is found in the secreted. It localises to the cell wall. The catalysed reaction is Successive hydrolysis of beta-D-glucose units from the non-reducing ends of (1-&gt;3)-beta-D-glucans, releasing alpha-glucose.. In Candida albicans (Yeast), this protein is Glucan 1,3-beta-glucosidase (BGL2).